A 350-amino-acid polypeptide reads, in one-letter code: Protein Wnt-2 (350 aa).

The signal sequence occupies residues 1–25 (MNFLPNGICFYLSVAICWFSSRVDA). 11 cysteine pairs are disulfide-bonded: cysteine 74–cysteine 85, cysteine 125–cysteine 133, cysteine 135–cysteine 155, cysteine 204–cysteine 218, cysteine 206–cysteine 213, cysteine 276–cysteine 307, cysteine 292–cysteine 302, cysteine 306–cysteine 346, cysteine 322–cysteine 337, cysteine 324–cysteine 334, and cysteine 329–cysteine 330. N-linked (GlcNAc...) asparagine glycosylation is present at asparagine 132. The O-palmitoleoyl serine; by PORCN moiety is linked to residue serine 210. N-linked (GlcNAc...) asparagine glycosylation is present at asparagine 293.

It belongs to the Wnt family. In terms of processing, palmitoleoylation is required for efficient binding to frizzled receptors. Depalmitoleoylation leads to Wnt signaling pathway inhibition.

It is found in the secreted. It localises to the extracellular space. The protein localises to the extracellular matrix. In terms of biological role, ligand for members of the frizzled family of seven transmembrane receptors. Functions in the canonical Wnt signaling pathway that results in activation of transcription factors of the TCF/LEF family. The sequence is that of Protein Wnt-2 (wnt2) from Danio rerio (Zebrafish).